The chain runs to 115 residues: Thionin-like protein 2 (115 aa).

Residues 1–20 (MLVAVMIVMVIGNLLAQTAA) form the signal peptide.

It belongs to the plant thionin (TC 1.C.44) family. In terms of processing, is disulfide-linked.

The protein resides in the secreted. In terms of biological role, may be involved in plant defense. In Arabidopsis thaliana (Mouse-ear cress), this protein is Thionin-like protein 2.